A 441-amino-acid chain; its full sequence is Ribulose bisphosphate carboxylase large chain (441 aa).

Lys-5 is subject to N6,N6,N6-trimethyllysine. 2 residues coordinate substrate: Asn-114 and Thr-164. The active-site Proton acceptor is the Lys-166. Residue Lys-168 participates in substrate binding. Residues Lys-192, Asp-194, and Glu-195 each coordinate Mg(2+). Lys-192 bears the N6-carboxylysine mark. Residue His-285 is the Proton acceptor of the active site. Arg-286, His-318, and Ser-370 together coordinate substrate.

It belongs to the RuBisCO large chain family. Type I subfamily. As to quaternary structure, heterohexadecamer of 8 large chains and 8 small chains; disulfide-linked. The disulfide link is formed within the large subunit homodimers. Mg(2+) is required as a cofactor. The disulfide bond which can form in the large chain dimeric partners within the hexadecamer appears to be associated with oxidative stress and protein turnover.

Its subcellular location is the plastid. The protein localises to the chloroplast. The enzyme catalyses 2 (2R)-3-phosphoglycerate + 2 H(+) = D-ribulose 1,5-bisphosphate + CO2 + H2O. It carries out the reaction D-ribulose 1,5-bisphosphate + O2 = 2-phosphoglycolate + (2R)-3-phosphoglycerate + 2 H(+). RuBisCO catalyzes two reactions: the carboxylation of D-ribulose 1,5-bisphosphate, the primary event in carbon dioxide fixation, as well as the oxidative fragmentation of the pentose substrate in the photorespiration process. Both reactions occur simultaneously and in competition at the same active site. This is Ribulose bisphosphate carboxylase large chain from Drosera dichrosepala (Rusty sundew).